The primary structure comprises 345 residues: Carbamoyl phosphate synthase small chain (345 aa).

Residues 1-169 (MKKYLVMEDG…FVKGEEGGTV (169 aa)) form a CPSase region. L-glutamine is bound by residues Ser-45, Gly-213, and Gly-215. In terms of domain architecture, Glutamine amidotransferase type-1 spans 168–345 (TVLFIDLGSK…GEMKRRIGYA (178 aa)). The Nucleophile role is filled by Cys-242. L-glutamine-binding residues include Phe-243, Gln-246, Asn-282, Gly-284, and Tyr-285. Residues His-321 and Glu-323 contribute to the active site.

The protein belongs to the CarA family. Composed of two chains; the small (or glutamine) chain promotes the hydrolysis of glutamine to ammonia, which is used by the large (or ammonia) chain to synthesize carbamoyl phosphate. Tetramer of heterodimers (alpha,beta)4.

The enzyme catalyses hydrogencarbonate + L-glutamine + 2 ATP + H2O = carbamoyl phosphate + L-glutamate + 2 ADP + phosphate + 2 H(+). The catalysed reaction is L-glutamine + H2O = L-glutamate + NH4(+). Its pathway is amino-acid biosynthesis; L-arginine biosynthesis; carbamoyl phosphate from bicarbonate: step 1/1. The protein operates within pyrimidine metabolism; UMP biosynthesis via de novo pathway; (S)-dihydroorotate from bicarbonate: step 1/3. Functionally, small subunit of the glutamine-dependent carbamoyl phosphate synthetase (CPSase). CPSase catalyzes the formation of carbamoyl phosphate from the ammonia moiety of glutamine, carbonate, and phosphate donated by ATP, constituting the first step of 2 biosynthetic pathways, one leading to arginine and/or urea and the other to pyrimidine nucleotides. The small subunit (glutamine amidotransferase) binds and cleaves glutamine to supply the large subunit with the substrate ammonia. The chain is Carbamoyl phosphate synthase small chain from Thermoplasma volcanium (strain ATCC 51530 / DSM 4299 / JCM 9571 / NBRC 15438 / GSS1).